Here is a 447-residue protein sequence, read N- to C-terminus: NADH-ubiquinone oxidoreductase chain 4 (447 aa).

A run of 13 helical transmembrane segments spans residues 28-48, 56-76, 89-109, 110-130, 141-161, 183-203, 213-233, 246-266, 273-293, 298-318, 331-351, 374-394, and 409-431; these read IFLL…FNYI, MVSY…LMAS, FVFM…SMSV, FMFY…ILGW, VYLL…IFYI, LLYL…LVHL, PVSG…YGLL, YNYW…LVCL, ALIA…LLTM, LTGS…LFCL, LLIN…WFLL, IVSW…FSAA, and YSGV…LHWL.

The protein belongs to the complex I subunit 4 family.

The protein localises to the mitochondrion membrane. The enzyme catalyses a ubiquinone + NADH + 5 H(+)(in) = a ubiquinol + NAD(+) + 4 H(+)(out). Core subunit of the mitochondrial membrane respiratory chain NADH dehydrogenase (Complex I) that is believed to belong to the minimal assembly required for catalysis. Complex I functions in the transfer of electrons from NADH to the respiratory chain. The immediate electron acceptor for the enzyme is believed to be ubiquinone. In Anopheles gambiae (African malaria mosquito), this protein is NADH-ubiquinone oxidoreductase chain 4 (mt:ND4).